The chain runs to 130 residues: Small ribosomal subunit protein uS9 (130 aa).

It belongs to the universal ribosomal protein uS9 family.

The chain is Small ribosomal subunit protein uS9 from Geobacillus thermodenitrificans (strain NG80-2).